The primary structure comprises 178 residues: Caveolin-1 (178 aa).

Ser2 is modified (N-acetylserine). Ser2 carries the phosphoserine modification. The interval 2–94 (SGGKYVDSEG…WKASFTTFTV (93 aa)) is required for homooligomerization. At 2-104 (SGGKYVDSEG…TKYWFYRLLS (103 aa)) the chain is on the cytoplasmic side. N6-acetyllysine; alternate is present on Lys5. Lys5 participates in a covalent cross-link: Glycyl lysine isopeptide (Lys-Gly) (interchain with G-Cter in ubiquitin); alternate. Residue Tyr6 is modified to Phosphotyrosine. Ser9 is subject to Phosphoserine. At Tyr14 the chain carries Phosphotyrosine; by ABL1. Position 25 is a phosphotyrosine (Tyr25). Glycyl lysine isopeptide (Lys-Gly) (interchain with G-Cter in ubiquitin) cross-links involve residues Lys26, Lys30, Lys39, Lys47, and Lys57. Residues 82–94 (DGIWKASFTTFTV) form an interaction with CAVIN3 region. Residues 105–125 (ALFGIPMALIWGIYFAILSFL) constitute an intramembrane region (helical). Topologically, residues 126–178 (HIWAVVPCIKSFLIEIQCISRVYSIYVHTFCDPLFEAIGKIFSNIRINTQKEI) are cytoplasmic. An interacts with SPRY1, SPRY2, SPRY3 and SPRY4 region spans residues 131–142 (VPCIKSFLIEIQ). 3 S-palmitoyl cysteine lipidation sites follow: Cys133, Cys143, and Cys156. The interacts with SPRY1, SPRY2, and SPRY4 stretch occupies residues 149–160 (SIYVHTFCDPLF). The interacts with SPRY1, SPRY2, SPRY3 and SPRY4 stretch occupies residues 167 to 178 (FSNIRINTQKEI).

Belongs to the caveolin family. In terms of assembly, homooligomer. Interacts with GLIPR2. Interacts with NOSTRIN. Interacts with SNAP25 and STX1A. Interacts (via the N-terminus) with DPP4; the interaction is direct. Interacts with CTNNB1, CDH1 and JUP. Interacts with PACSIN2; this interaction induces membrane tubulation. Interacts with SLC7A9. Interacts with BMX and BTK. Interacts with TGFBR1. Interacts with CAVIN3 (via leucine-zipper domain) in a cholesterol-sensitive manner. Interacts with CAVIN1. Interacts with EHD2 in a cholesterol-dependent manner. Forms a ternary complex with UBXN6 and VCP; mediates CAV1 targeting to lysosomes for degradation. Interacts with ABCG1; this interaction regulates ABCG1-mediated cholesterol efflux. Interacts with NEU3; this interaction enhances NEU3 sialidase activity within caveola. Interacts (via C-terminus) with SPRY1, SPRY2 (via C-terminus), SPRY3, and SPRY4. Interacts with IGFBP5; this interaction allows trafficking of IGFBP5 from the plasma membrane to the nucleus. In terms of processing, phosphorylated at Tyr-14 by ABL1 in response to oxidative stress. Ubiquitinated. Undergo monoubiquitination and multi- and/or polyubiquitination. Monoubiquitination of N-terminal lysines promotes integration in a ternary complex with UBXN6 and VCP which promotes oligomeric CAV1 targeting to lysosomes for degradation. Ubiquitinated by ZNRF1; leading to degradation and modulation of the TLR4-mediated immune response.

It is found in the golgi apparatus membrane. The protein resides in the cell membrane. It localises to the membrane. The protein localises to the caveola. Its subcellular location is the membrane raft. Its function is as follows. May act as a scaffolding protein within caveolar membranes. Forms a stable heterooligomeric complex with CAV2 that targets to lipid rafts and drives caveolae formation. Mediates the recruitment of CAVIN proteins (CAVIN1/2/3/4) to the caveolae. Interacts directly with G-protein alpha subunits and can functionally regulate their activity. Involved in the costimulatory signal essential for T-cell receptor (TCR)-mediated T-cell activation. Its binding to DPP4 induces T-cell proliferation and NF-kappa-B activation in a T-cell receptor/CD3-dependent manner. Recruits CTNNB1 to caveolar membranes and may regulate CTNNB1-mediated signaling through the Wnt pathway. Negatively regulates TGFB1-mediated activation of SMAD2/3 by mediating the internalization of TGFBR1 from membrane rafts leading to its subsequent degradation. Binds 20(S)-hydroxycholesterol (20(S)-OHC). The protein is Caveolin-1 (CAV1) of Bos taurus (Bovine).